We begin with the raw amino-acid sequence, 539 residues long: Chaperonin GroEL (539 aa).

Residues 29 to 32, 86 to 90, Gly-413, 479 to 481, and Asp-495 each bind ATP; these read TLGP, DGTTT, and DAL.

Belongs to the chaperonin (HSP60) family. As to quaternary structure, forms a cylinder of 14 subunits composed of two heptameric rings stacked back-to-back. Interacts with the co-chaperonin GroES.

It localises to the cytoplasm. It catalyses the reaction ATP + H2O + a folded polypeptide = ADP + phosphate + an unfolded polypeptide.. Together with its co-chaperonin GroES, plays an essential role in assisting protein folding. The GroEL-GroES system forms a nano-cage that allows encapsulation of the non-native substrate proteins and provides a physical environment optimized to promote and accelerate protein folding. This is Chaperonin GroEL from Pseudothermotoga lettingae (strain ATCC BAA-301 / DSM 14385 / NBRC 107922 / TMO) (Thermotoga lettingae).